Reading from the N-terminus, the 904-residue chain is Nitrate reductase [NADH] 2 (904 aa).

Polar residues-rich tracts occupy residues M1–F10 and P35–I50. The disordered stretch occupies residues M1–E65. Residues S56 to E65 are compositionally biased toward acidic residues. C183 contacts Mo-molybdopterin. In terms of domain architecture, Cytochrome b5 heme-binding spans S531–I606. The heme site is built by H566 and H589. In terms of domain architecture, FAD-binding FR-type spans R647–Q759. FAD-binding positions include R699–T702, V716–Y720, F721, F728, Q733–S735, and T786.

It belongs to the nitrate reductase family. As to quaternary structure, homodimer. It depends on FAD as a cofactor. Heme is required as a cofactor. Requires Mo-molybdopterin as cofactor.

The catalysed reaction is nitrite + NAD(+) + H2O = nitrate + NADH + H(+). Its activity is regulated as follows. Regulated by the nitrogen source and controlled by the circadian rhythm. In terms of biological role, nitrate reductase is a key enzyme involved in the first step of nitrate assimilation in plants, fungi and bacteria. This Nicotiana tabacum (Common tobacco) protein is Nitrate reductase [NADH] 2 (NIA2).